A 179-amino-acid chain; its full sequence is Nuclear transcription factor Y subunit B (179 aa).

The tract at residues 1–32 (MAEAPASPGGGGGSHESGSPRGGGGGGSVREQ) is disordered. Gly residues predominate over residues 8–28 (PGGGGGSHESGSPRGGGGGGS). Residues 36 to 42 (LPIANIS) mediate DNA binding. The interval 63–74 (VQECVSEFISFI) is subunit association domain (SAD). The disordered stretch occupies residues 147–179 (SSSAAEGMGQQGAYNQGMGYMQPQYHNGDISNV).

It belongs to the NFYB/HAP3 subunit family. As to quaternary structure, heterotrimeric transcription factor composed of three components, NF-YA, NF-YB and NF-YC. NF-YB and NF-YC must interact and dimerize for NF-YA association and DNA binding.

The protein resides in the nucleus. Component of the NF-Y/HAP transcription factor complex. The NF-Y complex stimulates the transcription of various genes by recognizing and binding to a CCAAT motif in promoters. This is Nuclear transcription factor Y subunit B (NFY2) from Zea mays (Maize).